We begin with the raw amino-acid sequence, 447 residues long: ATP-dependent protease ATPase subunit HslU (447 aa).

ATP-binding positions include I17 and 59 to 64 (GVGKTE). The interval 136–160 (PPARGGFQGEPTAEEKPTEKKESAT) is disordered. The span at 148–159 (AEEKPTEKKESA) shows a compositional bias: basic and acidic residues. ATP contacts are provided by D260, E325, and R397.

Belongs to the ClpX chaperone family. HslU subfamily. As to quaternary structure, a double ring-shaped homohexamer of HslV is capped on each side by a ring-shaped HslU homohexamer. The assembly of the HslU/HslV complex is dependent on binding of ATP.

It is found in the cytoplasm. ATPase subunit of a proteasome-like degradation complex; this subunit has chaperone activity. The binding of ATP and its subsequent hydrolysis by HslU are essential for unfolding of protein substrates subsequently hydrolyzed by HslV. HslU recognizes the N-terminal part of its protein substrates and unfolds these before they are guided to HslV for hydrolysis. The polypeptide is ATP-dependent protease ATPase subunit HslU (Coxiella burnetii (strain Dugway 5J108-111)).